Reading from the N-terminus, the 248-residue chain is 23S rRNA (guanosine-2'-O-)-methyltransferase RlmB (248 aa).

Residues G198, L218, and L227 each contribute to the S-adenosyl-L-methionine site.

Belongs to the class IV-like SAM-binding methyltransferase superfamily. RNA methyltransferase TrmH family. RlmB subfamily.

The protein resides in the cytoplasm. The enzyme catalyses guanosine(2251) in 23S rRNA + S-adenosyl-L-methionine = 2'-O-methylguanosine(2251) in 23S rRNA + S-adenosyl-L-homocysteine + H(+). Functionally, specifically methylates the ribose of guanosine 2251 in 23S rRNA. This chain is 23S rRNA (guanosine-2'-O-)-methyltransferase RlmB, found in Pseudomonas aeruginosa (strain ATCC 15692 / DSM 22644 / CIP 104116 / JCM 14847 / LMG 12228 / 1C / PRS 101 / PAO1).